The primary structure comprises 1199 residues: Metabotropic glutamate receptor 1 (1199 aa).

The signal sequence occupies residues 1–18 (MVRLLLIFFPMIFLEMSI). The Extracellular portion of the chain corresponds to 19 to 592 (LPRMPDRKVL…VRYLEWSDIE (574 aa)). A disulfide bond links cysteine 67 and cysteine 109. L-glutamate is bound at residue tyrosine 74. An N-linked (GlcNAc...) asparagine glycan is attached at asparagine 98. L-glutamate-binding positions include serine 165 and 186–188 (SAT). An N-linked (GlcNAc...) asparagine glycan is attached at asparagine 223. L-glutamate is bound at residue tyrosine 236. A disulfide bridge links cysteine 289 with cysteine 291. Residue aspartate 318 coordinates L-glutamate. Cysteine 378 and cysteine 394 form a disulfide bridge. The N-linked (GlcNAc...) asparagine glycan is linked to asparagine 397. L-glutamate is bound at residue lysine 409. A disulfide bridge connects residues cysteine 432 and cysteine 439. N-linked (GlcNAc...) asparagine glycosylation is present at asparagine 515. The chain crosses the membrane as a helical span at residues 593–615 (SIIAIAFSCLGILVTLFVTLIFV). The Cytoplasmic portion of the chain corresponds to 616-629 (LYRDTPVVKSSSRE). A helical membrane pass occupies residues 630–650 (LCYIILAGIFLGYVCPFTLIA). Topologically, residues 651-658 (KPTTTSCY) are extracellular. A disulfide bridge connects residues cysteine 657 and cysteine 746. The chain crosses the membrane as a helical span at residues 659-680 (LQRLLVGLSSAMCYSALVTKTN). The Cytoplasmic portion of the chain corresponds to 681–703 (RIARILAGSKKKICTRKPRFMSA). A helical transmembrane segment spans residues 704 to 727 (WAQVIIASILISVQLTLVVTLIIM). At 728–750 (EPPMPILSYPSIKEVYLICNTSN) the chain is on the extracellular side. The chain crosses the membrane as a helical span at residues 751-772 (LGVVAPVGYNGLLIMSCTYYAF). The Cytoplasmic segment spans residues 773-785 (KTRNVPANFNEAK). A helical transmembrane segment spans residues 786-807 (YIAFTMYTTCIIWLAFVPIYFG). At 808–815 (SNYKIITT) the chain is on the extracellular side. The helical transmembrane segment at 816–840 (CFAVSLSVTVALGCMFTPKMYIIIA) threads the bilayer. The Cytoplasmic segment spans residues 841–1199 (KPERNVRSAF…RDYKQSSSTL (359 aa)). Serine 853 bears the Phosphoserine mark. A Phosphothreonine modification is found at threonine 871. Disordered stretches follow at residues 882-905 (GAGN…QAPK), 959-1036 (EEDN…QPKS), and 1056-1081 (HAVL…PPQH). Polar residues predominate over residues 885-895 (NANSNGKSVSW). Phosphoserine occurs at positions 894 and 969. Pro residues predominate over residues 1012-1033 (GLPPPLPQQQPQQPPPQQPPQQ). A Phosphoserine modification is found at serine 1098. The disordered stretch occupies residues 1120-1177 (EREGNTEEDELEEEEDLPTASKLTPEDSPALTPPSPFRDSVASGSSVPSSPVSESVLC). The span at 1125-1136 (TEEDELEEEEDL) shows a compositional bias: acidic residues. Serine 1147 carries the phosphoserine modification. Threonine 1151 carries the post-translational modification Phosphothreonine. Residue serine 1154 is modified to Phosphoserine. Residues 1159 to 1175 (SVASGSSVPSSPVSESV) show a composition bias toward low complexity.

Belongs to the G-protein coupled receptor 3 family. In terms of assembly, homodimer; disulfide-linked. The PPXXF motif binds HOMER1, HOMER2 and HOMER3. Interacts with TAMALIN. Interacts with RYR1, RYR2, ITPR1, SHANK1 and SHANK3. Interacts with SIAH1. In terms of tissue distribution, predominantly expressed in cerebellar Purkinje cells, CA2-CA3 pyramidal cells of the hippocampus, and mitral and tufted cells of the olfactory bulb.

The protein resides in the cell membrane. It is found in the postsynaptic cell membrane. The protein localises to the cell projection. Its subcellular location is the dendrite. Its function is as follows. G-protein coupled receptor for glutamate. Ligand binding causes a conformation change that triggers signaling via guanine nucleotide-binding proteins (G proteins) and modulates the activity of down-stream effectors. Signaling activates a phosphatidylinositol-calcium second messenger system. May participate in the central action of glutamate in the CNS, such as long-term potentiation in the hippocampus and long-term depression in the cerebellum. May function in the light response in the retina. Induces GRID1 and GRID2 cation-channel activation via GNAQ-PLC-PKC pathway in dopaminergic neurons and cerebellar Purkinje cell, respectively. The chain is Metabotropic glutamate receptor 1 (Grm1) from Rattus norvegicus (Rat).